A 318-amino-acid chain; its full sequence is Na(+)-translocating NADH-quinone reductase subunit C (318 aa).

The chain crosses the membrane as a helical span at residues 13-33 (WYIILFIFVLSLVAGTLLSSV). Thr281 is subject to FMN phosphoryl threonine.

The protein belongs to the NqrC family. In terms of assembly, composed of six subunits; NqrA, NqrB, NqrC, NqrD, NqrE and NqrF. The cofactor is FMN.

It localises to the cell inner membrane. It carries out the reaction a ubiquinone + n Na(+)(in) + NADH + H(+) = a ubiquinol + n Na(+)(out) + NAD(+). In terms of biological role, NQR complex catalyzes the reduction of ubiquinone-1 to ubiquinol by two successive reactions, coupled with the transport of Na(+) ions from the cytoplasm to the periplasm. NqrA to NqrE are probably involved in the second step, the conversion of ubisemiquinone to ubiquinol. The chain is Na(+)-translocating NADH-quinone reductase subunit C from Chlamydia muridarum (strain MoPn / Nigg).